Consider the following 286-residue polypeptide: 4-hydroxybenzoate octaprenyltransferase (286 aa).

7 helical membrane-spanning segments follow: residues 20-40, 43-63, 83-103, 135-155, 160-180, 209-229, and 234-254; these read IGIL…ADGM, PMIL…GCAI, LATG…LSLC, FFAM…PMAF, GTVP…VIAY, VAGI…AGIL, and IWFY…YTMI.

This sequence belongs to the UbiA prenyltransferase family. Mg(2+) serves as cofactor.

It localises to the cell inner membrane. It catalyses the reaction all-trans-octaprenyl diphosphate + 4-hydroxybenzoate = 4-hydroxy-3-(all-trans-octaprenyl)benzoate + diphosphate. It functions in the pathway cofactor biosynthesis; ubiquinone biosynthesis. Catalyzes the prenylation of para-hydroxybenzoate (PHB) with an all-trans polyprenyl group. Mediates the second step in the final reaction sequence of ubiquinone-8 (UQ-8) biosynthesis, which is the condensation of the polyisoprenoid side chain with PHB, generating the first membrane-bound Q intermediate 3-octaprenyl-4-hydroxybenzoate. In Nitrosomonas eutropha (strain DSM 101675 / C91 / Nm57), this protein is 4-hydroxybenzoate octaprenyltransferase.